The following is a 199-amino-acid chain: Protein C (199 aa).

Polar residues-rich tracts occupy residues 19-34 (QLISPRPSTSLNSYSA) and 43-57 (KTTQSTQEPSNSAPP). Residues 19 to 67 (QLISPRPSTSLNSYSAPTPKKTYRKTTQSTQEPSNSAPPSVNQKSNQQK) form a disordered region. Positions 58-67 (SVNQKSNQQK) are enriched in low complexity.

This sequence belongs to the respirovirus protein C family.

The chain is Protein C (P/V/C) from Human parainfluenza 3 virus (strain Wash/47885/57) (HPIV-3).